Consider the following 834-residue polypeptide: Periplasmic nitrate reductase (834 aa).

The segment at residues 1 to 29 (MNLTRREFAKANAAAIAAAAAGLPILVRA) is a signal peptide (tat-type signal). One can recognise a 4Fe-4S Mo/W bis-MGD-type domain in the interval 41-97 (LVWNKAPCRFCGTGCSVMVATRDGQVVATHGDIKAEVNRGINCVKGYFLSKIMYGSD). Residues C48, C51, C55, and C83 each contribute to the [4Fe-4S] cluster site. Residues K85, Q152, N177, C181, 214–221 (WGSNMAEM), 245–249 (STFEH), 264–266 (QTD), M375, Q379, N485, 511–512 (SD), K534, D561, and 721–730 (TGRVLEHWHT) each bind Mo-bis(molybdopterin guanine dinucleotide). F797 is a binding site for substrate. N805 and K822 together coordinate Mo-bis(molybdopterin guanine dinucleotide).

It belongs to the prokaryotic molybdopterin-containing oxidoreductase family. NasA/NapA/NarB subfamily. In terms of assembly, component of the periplasmic nitrate reductase NapAB complex composed of NapA and NapB. [4Fe-4S] cluster serves as cofactor. Requires Mo-bis(molybdopterin guanine dinucleotide) as cofactor. In terms of processing, predicted to be exported by the Tat system. The position of the signal peptide cleavage has not been experimentally proven.

Its subcellular location is the periplasm. The enzyme catalyses 2 Fe(II)-[cytochrome] + nitrate + 2 H(+) = 2 Fe(III)-[cytochrome] + nitrite + H2O. Its function is as follows. Catalytic subunit of the periplasmic nitrate reductase complex NapAB. Receives electrons from NapB and catalyzes the reduction of nitrate to nitrite. The chain is Periplasmic nitrate reductase from Pseudomonas aeruginosa (strain UCBPP-PA14).